Consider the following 677-residue polypeptide: Mitochondrial disaggregase (677 aa).

The transit peptide at 1–28 (MLGSLVSKRTAPAPRLLLQLLRSPSLRS) directs the protein to the mitochondrion. Positions 92-126 (PSPEDTLPGQDSWNGVLSRAGLGVWALATALVVHC) are autoinhibitory. ANK repeat units lie at residues 133 to 162 (SKDAALMEAARANNVQEVSRLLSEGADVNA), 166 to 195 (LGWTALMVAAINRNDSVVQVLLAAGADPNL), 235 to 265 (KGCTALHYAVLADDYRTVKELLDGGANPLQR), and 268 to 297 (MGHTPLDYAREGEVMKLLRTSETKYQEKQR). 10 residues coordinate ATP: H316, I318, S353, G354, I355, G356, K357, T358, E425, and N466. The segment at 477-505 (LQLRQEALEMSRNRIAENLGDVQISDKIT) is regulatory; slows ATPase and disaggregase activities. An ATP-binding site is contributed by R531. K559 carries the N6-acetyllysine modification. R590 serves as a coordination point for ATP.

It belongs to the ClpA/ClpB family. Homododecamer when substrate-bound; the homododecamer consists of 2 homohexamers stacked head-to-head via ANK repeat-mediated interactions. The active substrate-bound form is likely to exist in a dynamic equilibrium between homohexamers and homododecamers. Homotetradecamer in the unbound state which is remodeled upon substrate binding into the homododecamer. Interacts with PHB and PHB2. Interacts with MAVS; the interaction is enhanced by Sendai virus infection. Proteolytically cleaved by protease PARL. ATP-dependent protein disaggregase activity is stimulated by PARL-mediated cleavage of the N-terminal autoinhibitory peptide.

It is found in the mitochondrion intermembrane space. It catalyses the reaction ATP + H2O = ADP + phosphate + H(+). Disaggregase activity is inhibited by ADP. Functions as a regulatory ATPase and participates in secretion/protein trafficking process. Has ATP-dependent protein disaggregase activity and is required to maintain the solubility of key mitochondrial proteins. Involved in mitochondrial-mediated antiviral innate immunity, activates RIG-I-mediated signal transduction and production of IFNB1 and pro-inflammatory cytokine IL6. Plays a role in granulocyte differentiation. This Bos taurus (Bovine) protein is Mitochondrial disaggregase.